The chain runs to 258 residues: Adenylate kinase (258 aa).

Position 52-57 (52-57) interacts with ATP; it reads GAGKGT. The NMP stretch occupies residues 72 to 101; it reads ATGDMLRSQVAKKTALGKEAKKIMDQGGLV. Residues threonine 73, arginine 78, 99-101, 128-131, and glutamine 135 contribute to the AMP site; these read GLV and GFPR. An LID region spans residues 169-206; the sequence is GRLVHPASGRSYHKIFNPPKEEMKDDVTGEPLIQRSDD. ATP-binding positions include arginine 170 and 179–180; that span reads SY. The AMP site is built by arginine 203 and arginine 214. Glutamine 242 contributes to the ATP binding site.

Belongs to the adenylate kinase family. AK2 subfamily. In terms of assembly, monomer.

It localises to the cytoplasm. The protein resides in the cytosol. It is found in the mitochondrion intermembrane space. The enzyme catalyses AMP + ATP = 2 ADP. Its function is as follows. Catalyzes the reversible transfer of the terminal phosphate group between ATP and AMP. Plays an important role in cellular energy homeostasis and in adenine nucleotide metabolism. Adenylate kinase activity is critical for regulation of the phosphate utilization and the AMP de novo biosynthesis pathways. The polypeptide is Adenylate kinase (adk1) (Aspergillus niger (strain ATCC MYA-4892 / CBS 513.88 / FGSC A1513)).